A 467-amino-acid polypeptide reads, in one-letter code: 3-isopropylmalate dehydratase large subunit (467 aa).

Cysteine 349, cysteine 409, and cysteine 412 together coordinate [4Fe-4S] cluster. Residues 422-443 are disordered; sequence PGQRSASTSNRNFEGRQGRGGR.

Belongs to the aconitase/IPM isomerase family. LeuC type 1 subfamily. In terms of assembly, heterodimer of LeuC and LeuD. Requires [4Fe-4S] cluster as cofactor.

The enzyme catalyses (2R,3S)-3-isopropylmalate = (2S)-2-isopropylmalate. It functions in the pathway amino-acid biosynthesis; L-leucine biosynthesis; L-leucine from 3-methyl-2-oxobutanoate: step 2/4. In terms of biological role, catalyzes the isomerization between 2-isopropylmalate and 3-isopropylmalate, via the formation of 2-isopropylmaleate. The polypeptide is 3-isopropylmalate dehydratase large subunit (Paramagnetospirillum magneticum (strain ATCC 700264 / AMB-1) (Magnetospirillum magneticum)).